A 214-amino-acid polypeptide reads, in one-letter code: Ribosomal RNA small subunit methyltransferase G (214 aa).

Residues G81, M86, 132–133 (VE), and R147 contribute to the S-adenosyl-L-methionine site.

It belongs to the methyltransferase superfamily. RNA methyltransferase RsmG family.

The protein localises to the cytoplasm. The catalysed reaction is guanosine(527) in 16S rRNA + S-adenosyl-L-methionine = N(7)-methylguanosine(527) in 16S rRNA + S-adenosyl-L-homocysteine. Functionally, specifically methylates the N7 position of guanine in position 527 of 16S rRNA. The protein is Ribosomal RNA small subunit methyltransferase G of Ectopseudomonas mendocina (strain ymp) (Pseudomonas mendocina).